The chain runs to 573 residues: MLO-like protein 11 (573 aa).

Residues Met-1–Ala-19 are Extracellular-facing. A helical transmembrane segment spans residues Leu-20–Val-40. The Cytoplasmic portion of the chain corresponds to Glu-41–Glu-69. The helical transmembrane segment at Leu-70–Ile-90 threads the bilayer. The Extracellular segment spans residues Cys-91–Arg-163. A helical membrane pass occupies residues Phe-164–Ile-184. The Cytoplasmic segment spans residues Val-185–Arg-287. 2 helical membrane passes run Ile-288 to Lys-308 and Gly-309 to Ala-329. Topologically, residues Lys-330 to Ser-371 are cytoplasmic. A helical membrane pass occupies residues Leu-372–Trp-392. Residues Gln-393 to Leu-411 lie on the Extracellular side of the membrane. The helical transmembrane segment at Leu-412–Val-432 threads the bilayer. The Cytoplasmic portion of the chain corresponds to Thr-433–Val-573. A calmodulin-binding region spans residues Gln-446–Leu-467. Disordered stretches follow at residues Glu-500 to Arg-532 and Arg-554 to Val-573. Positions Glu-507–Gln-516 are enriched in low complexity. A compositionally biased stretch (polar residues) spans Leu-561 to Val-573.

It belongs to the MLO family.

Its subcellular location is the membrane. May be involved in modulation of pathogen defense and leaf cell death. Activity seems to be regulated by Ca(2+)-dependent calmodulin binding and seems not to require heterotrimeric G proteins. In Arabidopsis thaliana (Mouse-ear cress), this protein is MLO-like protein 11 (MLO11).